A 565-amino-acid chain; its full sequence is MSQLRWWVVSQLLLLIVVCILDHSEGARVCPKIVPGLDKLRVGVDITKLDLLPLFDLGDNGFRSAVADYTCDRGQTTVVDGESFDVPDQVDSVVIESSGQQTSSVTTIKSESQISQALSISAGISVDTAKAGFSSSASYAEMQEAITKYGRTVSQMSAVYTTCSANLSPNLLLGQNPLQTLSRLPSDFTADTEGYYDFIKTYGTHYFNKGKLGGMFLFTSETDMSYFQNKNSQQVEANIKATFASILSTETGGSSDQSKEVIEFKESSLITAKFFGGRTNLAADGLTKWQPTIAKLPYFMSGTLSTISSLIADTTKRASMELAVKNYLLKAKVANLDRLTYIRLNSWTVGHNELRDLSAQLQNLKKKTIFSDEDEKLLQSIEDQVSVPAWFSDRTTFCFRSTAVGSADQCNGQSTSTLCAEPNRYTQQYMDKTYLGDTGCRLVWKLSTTESSDWFKSVKVNFRWYPTWSPCACGPVGTPFTISAPANSWTQDYLDVTNPKFGECMLQWMIEVPPTATLWAKNLEFCIDFTCGKKKQCVDANHWTEPYLDISAHEACGMSWALIAK.

Residues 1 to 26 (MSQLRWWVVSQLLLLIVVCILDHSEG) form the signal peptide. The MACPF domain occupies 27–340 (ARVCPKIVPG…AKVANLDRLT (314 aa)).

Perivitellin-2 is a heterooctamer of 4 identical 98 kDa heterodimers, each composed of one 31 kDa and one 67 kDa subunits. The 98 kDa heterodimer subunits are held together by disulfide bridges while the heterodimers are assembled into the native perivitellin-2 octamer by non-covalent forces. In terms of processing, glycosylated. Contains four O-linked and one N-linked oligosaccharide bonds. The protein contains 2.5% of carbohydrates (high levels of mannose, galactose, and NAcGlucosamine, and small amounts of NacGalactosamine). PV2 is a very high density lipoprotein (VHDL). It contains 3.75% of lipids. The major lipid classes are free sterols and phospholipids and also have significant quantities of energy-providing triacylglycerides and free fatty acids. In terms of tissue distribution, produced by albumen secretory cells. Found in developing eggs.

Its subcellular location is the secreted. The protein resides in the target cell membrane. In terms of biological role, the egg defensive protein perivitellin-2 is a pore-forming two-subunit glycoprotein that affects both the nervous and digestive systems of mammals. In addition, it is a source of both structural and energetic molecules during embryonic development. The tachylectin subunit (31 kDa) binds target membranes while the MACPF subunit (67 kDa) disrupts lipid bilayers forming large pores altering the plasma membrance conductance. Both in vivo and in vitro, the protein shows wide pH range stability and is resistant to enzymatic proteolysis from gastrointestinal environments. It specifically binds mature enterocytes but does not cause cell disruption on caco-2 (human colorectal adenocarcinoma cells) or rat intestinal cells. After oral administration to mice, it binds enterocytes and induces large dose-dependent morphological changes on their small intestine mucosa, reducing the absorptive surface. Additionally, it is detected in the Peyer's patches where it activates lymphoid follicles and triggers apoptosis. The toxin can also traverse the intestinal barrier and induce oral adaptive immunity with evidence of circulating antibody response. The toxin also shows hemagglutination properties thanks to the tachylectin subunit, but does not show hemolytic activity. In addition to enterotoxin activity, the toxin also acts as a neurotoxin, since an intraperitoneal injection induces paralysis of the mice rear limbs, followed by death. The polypeptide is Perivitellin-2 67 kDa subunit (Pomacea canaliculata (Golden apple snail)).